The sequence spans 243 residues: Pyridoxine 5'-phosphate synthase (243 aa).

Residue asparagine 7 participates in 3-amino-2-oxopropyl phosphate binding. 9–10 is a binding site for 1-deoxy-D-xylulose 5-phosphate; it reads DH. 3-amino-2-oxopropyl phosphate is bound at residue arginine 18. Histidine 43 functions as the Proton acceptor in the catalytic mechanism. Residues arginine 45 and histidine 50 each contribute to the 1-deoxy-D-xylulose 5-phosphate site. Glutamate 70 (proton acceptor) is an active-site residue. Residue threonine 100 coordinates 1-deoxy-D-xylulose 5-phosphate. Histidine 192 functions as the Proton donor in the catalytic mechanism. Residues glycine 193 and 215–216 each bind 3-amino-2-oxopropyl phosphate; that span reads GF.

Belongs to the PNP synthase family. As to quaternary structure, homooctamer; tetramer of dimers.

The protein resides in the cytoplasm. It carries out the reaction 3-amino-2-oxopropyl phosphate + 1-deoxy-D-xylulose 5-phosphate = pyridoxine 5'-phosphate + phosphate + 2 H2O + H(+). It participates in cofactor biosynthesis; pyridoxine 5'-phosphate biosynthesis; pyridoxine 5'-phosphate from D-erythrose 4-phosphate: step 5/5. In terms of biological role, catalyzes the complicated ring closure reaction between the two acyclic compounds 1-deoxy-D-xylulose-5-phosphate (DXP) and 3-amino-2-oxopropyl phosphate (1-amino-acetone-3-phosphate or AAP) to form pyridoxine 5'-phosphate (PNP) and inorganic phosphate. In Salinibacter ruber (strain DSM 13855 / M31), this protein is Pyridoxine 5'-phosphate synthase.